Consider the following 109-residue polypeptide: Small ribosomal subunit protein eS25z (109 aa).

Residues 1–36 (MAPKKDKVPPPSSKPAKSGGGKQKKKKWSKGKQKEK) form a disordered region. Residues 22-31 (KQKKKKWSKG) show a composition bias toward basic residues.

It belongs to the eukaryotic ribosomal protein eS25 family.

The chain is Small ribosomal subunit protein eS25z (RPS25A) from Arabidopsis thaliana (Mouse-ear cress).